A 280-amino-acid chain; its full sequence is Putative high affinity immunoglobulin gamma Fc receptor IB (280 aa).

The N-terminal stretch at 1–15 (MWFLTTLLLWVPVDG) is a signal peptide. Topologically, residues 16 to 198 (QVDTTKAVIT…LQLPTPVWFH (183 aa)) are extracellular. 2 consecutive Ig-like C2-type domains span residues 22–101 (AVIT…LEIH) and 95–184 (PIQL…ISQY). 2 disulfides stabilise this stretch: C43–C85 and C124–C168. N-linked (GlcNAc...) asparagine glycans are attached at residues N59, N152, and N163. The helical transmembrane segment at 199–219 (VLFYLAVGIMFLVNTVLWVTI) threads the bilayer. At 220-280 (RKELKRKKKW…VHRKEPQGAT (61 aa)) the chain is on the cytoplasmic side. The tract at residues 258–280 (KCQEQKEEQLQEGVHRKEPQGAT) is disordered.

It belongs to the immunoglobulin superfamily. FCGR1 family.

The protein localises to the cell membrane. May bind to the Fc region of immunoglobulins gamma with a low affinity compared to FCGR1A. May function in the humoral immune response. The polypeptide is Putative high affinity immunoglobulin gamma Fc receptor IB (Homo sapiens (Human)).